The following is a 375-amino-acid chain: Glutamate 5-kinase (375 aa).

ATP is bound at residue K13. Substrate is bound by residues S54, D141, and N153. ATP contacts are provided by residues 173–174 (TD) and 216–222 (TGGMATK). Positions 281 to 359 (TGKIFIDAGA…EAIAAVLGYV (79 aa)) constitute a PUA domain.

The protein belongs to the glutamate 5-kinase family.

It is found in the cytoplasm. It carries out the reaction L-glutamate + ATP = L-glutamyl 5-phosphate + ADP. It participates in amino-acid biosynthesis; L-proline biosynthesis; L-glutamate 5-semialdehyde from L-glutamate: step 1/2. Functionally, catalyzes the transfer of a phosphate group to glutamate to form L-glutamate 5-phosphate. The chain is Glutamate 5-kinase from Synechocystis sp. (strain ATCC 27184 / PCC 6803 / Kazusa).